The sequence spans 382 residues: Pyrimidine monooxygenase RutA (382 aa).

Residues 68-69, asparagine 134, glutamate 143, 159-160, and serine 209 each bind FMN; these read IK and RY.

This sequence belongs to the NtaA/SnaA/DszA monooxygenase family. RutA subfamily.

The enzyme catalyses uracil + FMNH2 + NADH + O2 = (Z)-3-ureidoacrylate + FMN + NAD(+) + H2O + H(+). It catalyses the reaction thymine + FMNH2 + NADH + O2 = (Z)-2-methylureidoacrylate + FMN + NAD(+) + H2O + H(+). Functionally, catalyzes the pyrimidine ring opening between N-3 and C-4 by an unusual flavin hydroperoxide-catalyzed mechanism, adding oxygen atoms in the process to yield ureidoacrylate peracid, that immediately reacts with FMN forming ureidoacrylate and FMN-N(5)-oxide. The FMN-N(5)-oxide reacts spontaneously with NADH to produce FMN. Requires the flavin reductase RutF to regenerate FMN in vivo. The chain is Pyrimidine monooxygenase RutA from Escherichia coli O55:H7 (strain CB9615 / EPEC).